The sequence spans 79 residues: Sec-independent protein translocase protein TatA (79 aa).

The chain crosses the membrane as a helical span at residues 1–21 (MGGWSSPSHWLIILLIVVLLF). A compositionally biased stretch (basic and acidic residues) spans 52–61 (KNTQKIEENK). The segment at 52 to 79 (KNTQKIEENKNTTNNTSADASIDKTKKA) is disordered.

This sequence belongs to the TatA/E family. The Tat system comprises two distinct complexes: a TatABC complex, containing multiple copies of TatA, TatB and TatC subunits, and a separate TatA complex, containing only TatA subunits. Substrates initially bind to the TatABC complex, which probably triggers association of the separate TatA complex to form the active translocon.

It is found in the cell inner membrane. In terms of biological role, part of the twin-arginine translocation (Tat) system that transports large folded proteins containing a characteristic twin-arginine motif in their signal peptide across membranes. TatA could form the protein-conducting channel of the Tat system. This Campylobacter jejuni subsp. jejuni serotype O:6 (strain 81116 / NCTC 11828) protein is Sec-independent protein translocase protein TatA.